Here is a 325-residue protein sequence, read N- to C-terminus: Dehydrogenase/reductase SDR family member 7B (325 aa).

Residues 1–17 lie on the Cytoplasmic side of the membrane; it reads MVSAATRKSLLRARVMD. Residues 18–38 traverse the membrane as a helical; Signal-anchor for type II membrane protein segment; it reads FITSTAILPLLLGCVGLFSLF. At 39–325 the chain is on the lumenal side; sequence KLLQWLRMRA…ARKERKSKHS (287 aa). NAD(+) is bound by residues serine 62 and leucine 64. Serine 194 lines the substrate pocket. 3 residues coordinate NAD(+): tyrosine 207, lysine 211, and threonine 242. Tyrosine 207 acts as the Proton acceptor in catalysis.

The protein belongs to the short-chain dehydrogenases/reductases (SDR) family.

The protein resides in the endoplasmic reticulum membrane. Its function is as follows. Putative oxidoreductase. The chain is Dehydrogenase/reductase SDR family member 7B (DHRS7B) from Bos taurus (Bovine).